Here is a 106-residue protein sequence, read N- to C-terminus: SDO1-like protein C21C3.19 (106 aa).

Belongs to the SDO1-like family.

Its subcellular location is the cytoplasm. It localises to the nucleus. May play a role in RNA metabolism. The chain is SDO1-like protein C21C3.19 from Schizosaccharomyces pombe (strain 972 / ATCC 24843) (Fission yeast).